Consider the following 514-residue polypeptide: MSVSKKPMVLVILDGYGYREEQQDNAILNAKTPVMDALWAKRPHTLIDASGLEVGLPDRQMGNSEVGHVNLGAGRIVYQDLTRLDVEIKERTFFANPVLTNAVDQAKNAGKAVHIMGLLSAGGVHSHEDHIMAMVELAAERGAEKIYLHAFLDGRDTPPRSAEASLKKFEDKFAALGKGRVASIVGRYYAMDRDNRWDRVEKAYDLMTLAQGEFQADTAVAGLQAAYARDENDEFVKATVIRAEGQADAAMEDGDTLIFMNFRADRAREITRAFVNADFDGFARKKVVNLNFVMLTEYAADIKTAVAYPPASLANTFGEWMAKNDKTQLRISETEKYAHVTFFFNGGVEEPFAGEERILINSPKVATYDLQPEMSSAELTEKLVAAIESGKYDTIICNYPNGDMVGHTGVMEAAIKAVEALDNCIEQVTKAVESVGGQLLITADHGNAEQMRDPATGQEHTAHTNLPVPLIYVGEKNVKAVEGGKLSDIAPTMLSLMGMEIPQEMTGKPLFIVE.

Positions 14 and 64 each coordinate Mn(2+). Catalysis depends on serine 64, which acts as the Phosphoserine intermediate. Residues histidine 125, 155 to 156, arginine 187, arginine 193, 263 to 266, and lysine 336 contribute to the substrate site; these read RD and RADR. Mn(2+)-binding residues include aspartate 403, histidine 407, aspartate 444, histidine 445, and histidine 463.

Belongs to the BPG-independent phosphoglycerate mutase family. Monomer. It depends on Mn(2+) as a cofactor.

The enzyme catalyses (2R)-2-phosphoglycerate = (2R)-3-phosphoglycerate. It functions in the pathway carbohydrate degradation; glycolysis; pyruvate from D-glyceraldehyde 3-phosphate: step 3/5. In terms of biological role, catalyzes the interconversion of 2-phosphoglycerate and 3-phosphoglycerate. The protein is 2,3-bisphosphoglycerate-independent phosphoglycerate mutase of Salmonella typhi.